We begin with the raw amino-acid sequence, 232 residues long: Ubiquinone biosynthesis O-methyltransferase (232 aa).

Arginine 36, glycine 55, aspartate 76, and methionine 120 together coordinate S-adenosyl-L-methionine.

This sequence belongs to the methyltransferase superfamily. UbiG/COQ3 family.

It catalyses the reaction a 3-demethylubiquinol + S-adenosyl-L-methionine = a ubiquinol + S-adenosyl-L-homocysteine + H(+). It carries out the reaction a 3-(all-trans-polyprenyl)benzene-1,2-diol + S-adenosyl-L-methionine = a 2-methoxy-6-(all-trans-polyprenyl)phenol + S-adenosyl-L-homocysteine + H(+). The protein operates within cofactor biosynthesis; ubiquinone biosynthesis. O-methyltransferase that catalyzes the 2 O-methylation steps in the ubiquinone biosynthetic pathway. The protein is Ubiquinone biosynthesis O-methyltransferase of Burkholderia thailandensis (strain ATCC 700388 / DSM 13276 / CCUG 48851 / CIP 106301 / E264).